The chain runs to 310 residues: Probable plastid-lipid-associated protein 2, chloroplastic (310 aa).

A chloroplast-targeting transit peptide spans 1–59; it reads MATVQLSTQFSCQTRVSISPNSKSISKPPFLVPVTSIIHRPMISTGGIAVSPRRVFKVR. A Phosphothreonine modification is found at Thr-61. Positions 65-94 form a coiled coil; it reads EIGSALLAAEEAIEDVEETERLKRSLVDSL.

This sequence belongs to the PAP/fibrillin family.

It is found in the plastid. It localises to the chloroplast. Its subcellular location is the plastoglobule. Functionally, probably involved in light/cold stress-related jasmonate (JA) biosynthesis. The polypeptide is Probable plastid-lipid-associated protein 2, chloroplastic (PAP2) (Arabidopsis thaliana (Mouse-ear cress)).